Here is a 475-residue protein sequence, read N- to C-terminus: tRNA modification GTPase MnmE (475 aa).

The (6S)-5-formyl-5,6,7,8-tetrahydrofolate site is built by Arg-24, Glu-81, and Lys-124. The 178-residue stretch at Gly-220–Gly-397 folds into the TrmE-type G domain. Asn-230 is a K(+) binding site. GTP-binding positions include Asn-230–Ser-235, Thr-249–Thr-255, Asp-274–Gly-277, and Ser-378–Arg-380. Mg(2+) is bound at residue Ser-234. The K(+) site is built by Thr-249, Ile-251, and Thr-254. Thr-255 contacts Mg(2+). Lys-475 is a binding site for (6S)-5-formyl-5,6,7,8-tetrahydrofolate.

The protein belongs to the TRAFAC class TrmE-Era-EngA-EngB-Septin-like GTPase superfamily. TrmE GTPase family. In terms of assembly, homodimer. Heterotetramer of two MnmE and two MnmG subunits. It depends on K(+) as a cofactor.

The protein localises to the cytoplasm. Its function is as follows. Exhibits a very high intrinsic GTPase hydrolysis rate. Involved in the addition of a carboxymethylaminomethyl (cmnm) group at the wobble position (U34) of certain tRNAs, forming tRNA-cmnm(5)s(2)U34. The chain is tRNA modification GTPase MnmE from Cupriavidus metallidurans (strain ATCC 43123 / DSM 2839 / NBRC 102507 / CH34) (Ralstonia metallidurans).